The primary structure comprises 200 residues: Ribonuclease HII (200 aa).

The 187-residue stretch at Glu14 to Asp200 folds into the RNase H type-2 domain. A divalent metal cation contacts are provided by Asp20, Glu21, and Asp112.

It belongs to the RNase HII family. It depends on Mn(2+) as a cofactor. Requires Mg(2+) as cofactor.

It is found in the cytoplasm. It carries out the reaction Endonucleolytic cleavage to 5'-phosphomonoester.. Functionally, endonuclease that specifically degrades the RNA of RNA-DNA hybrids. The chain is Ribonuclease HII from Salinibacter ruber (strain DSM 13855 / M31).